The following is a 945-amino-acid chain: MGARSGARGALLLALLLCWDPRLSQAGTDSGSEVLPDSFPSAPAEPLPYFLQEPQDAYIVKNKPVELRCRAFPATQIYFKCNGEWVSQNDHVTQEGLDEATGLRVREVQIEVSRQQVEELFGLEDYWCQCVAWSSAGTTKSRRAYVRIAYLRKNFDQEPLGKEVPLDHEVLLQCRPPEGVPVAEVEWLKNEDVIDPTQDTNFLLTIDHNLIIRQARLSDTANYTCVAKNIVAKRRSTTATVIVYVNGGWSSWAEWSPCSNRCGRGWQKRTRTCTNPAPLNGGAFCEGQAFQKTACTTICPVDGAWTEWSKWSACSTECAHWRSRECMAPPPQNGGRDCSGTLLDSKNCTDGLCMQNKKTLSDPNSHLLEASGDAALYAGLVVAIFVVVAILMAVGVVVYRRNCRDFDTDITDSSAALTGGFHPVNFKTARPSNPQLLHPSVPPDLTASAGIYRGPVYALQDSTDKIPMTNSPLLDPLPSLKVKVYSSSTTGSGPGLADGADLLGVLPPGTYPSDFARDTHFLHLRSASLGSQQLLGLPRDPGSSVSGTFGCLGGRLSIPGTGVSLLVPNGAIPQGKFYEMYLLINKAESTLPLSEGTQTVLSPSVTCGPTGLLLCRPVILTMPHCAEVSARDWIFQLKTQAHQGHWEEVVTLDEETLNTPCYCQLEPRACHILLDQLGTYVFTGESYSRSAVKRLQLAVFAPALCTSLEYSLRVYCLEDTPVALKEVLELERTLGGYLVEEPKPLMFKDSYHNLRLSLHDLPHAHWRSKLLAKYQEIPFYHIWSGSQKALHCTFTLERHSLASTELTCKICVRQVEGEGQIFQLHTTLAETPAGSLDTLCSAPGSTVTTQLGPYAFKIPLSIRQKICNSLDAPNSRGNDWRMLAQKLSMDRYLNYFATKASPTGVILDLWEALQQDDGDLNSLASALEEMGKSEMLVAVATDGDC.

Residues 1-26 (MGARSGARGALLLALLLCWDPRLSQA) form the signal peptide. Topologically, residues 27–377 (GTDSGSEVLP…LEASGDAALY (351 aa)) are extracellular. The Ig-like domain maps to 48 to 145 (PYFLQEPQDA…AGTTKSRRAY (98 aa)). 9 disulfides stabilise this stretch: C69–C130, C81–C128, C174–C225, C258–C295, C262–C299, C273–C285, C314–C348, C318–C353, and C326–C338. Residues 147 to 242 (RIAYLRKNFD…KRRSTTATVI (96 aa)) form the Ig-like C2-type domain. A glycan (N-linked (GlcNAc...) asparagine) is linked at N222. TSP type-1 domains follow at residues 246–300 (NGGW…TICP) and 302–354 (DGAW…GLCM). N-linked (GlcNAc...) asparagine glycosylation occurs at N347. A helical transmembrane segment spans residues 378–398 (AGLVVAIFVVVAILMAVGVVV). At 399–945 (YRRNCRDFDT…LVAVATDGDC (547 aa)) the chain is on the cytoplasmic side. The S-palmitoyl cysteine moiety is linked to residue C403. One can recognise a ZU5 domain in the interval 543–686 (SSVSGTFGCL…LGTYVFTGES (144 aa)). Y581 carries the phosphotyrosine modification. Residues 689 to 838 (RSAVKRLQLA…AETPAGSLDT (150 aa)) form a UPA domain region. The segment at 707-725 (SLEYSLRVYCLEDTPVALK) is interaction with DCC. One can recognise a Death domain in the interval 865–943 (KICNSLDAPN…EMLVAVATDG (79 aa)).

The protein belongs to the unc-5 family. Interacts with the cytoplasmic part of DCC. Interacts with GNAI2 via its cytoplasmic part. Interacts (via death domain) with DAPK1 (via death domain). Interacts (via extracellular domain) with FLRT3 (via extracellular domain); the interaction is direct. Interacts (via extracellular domain) with FLRT2 and FLRT3 (via extracellular domain), but has higher affinity for FLRT3. Identified in a complex with FLRT3 and ADGRL3; does not interact with ADGRL3 by itself. In terms of processing, phosphorylated on cytoplasmic tyrosine residues. Proteolytically cleaved by caspases during apoptosis. The cleavage does not take place when the receptor is associated with netrin ligand. Its cleavage by caspases is required to induce apoptosis. Post-translationally, palmitoylation is required for pro-apoptotic activity, but not for location at lipid rafts. As to expression, highly expressed in brain. Also expressed at lower level in developing lung, cartilage, kidney and hematopoietic and immune tissues.

Its subcellular location is the cell membrane. It localises to the membrane raft. Its function is as follows. Receptor for netrin required for axon guidance. Mediates axon repulsion of neuronal growth cones in the developing nervous system upon ligand binding. Axon repulsion in growth cones may be caused by its association with DCC that may trigger signaling for repulsion. Functions as a netrin receptor that negatively regulates vascular branching during angiogenesis. Mediates retraction of tip cell filopodia on endothelial growth cones in response to netrin. It also acts as a dependence receptor required for apoptosis induction when not associated with netrin ligand. Mediates apoptosis by activating DAPK1. In the absence of NTN1, activates DAPK1 by reducing its autoinhibitory phosphorylation at Ser-308 thereby increasing its catalytic activity. The protein is Netrin receptor UNC5B (UNC5B) of Homo sapiens (Human).